Consider the following 76-residue polypeptide: Exodeoxyribonuclease 7 small subunit (76 aa).

The protein belongs to the XseB family. As to quaternary structure, heterooligomer composed of large and small subunits.

It is found in the cytoplasm. It carries out the reaction Exonucleolytic cleavage in either 5'- to 3'- or 3'- to 5'-direction to yield nucleoside 5'-phosphates.. In terms of biological role, bidirectionally degrades single-stranded DNA into large acid-insoluble oligonucleotides, which are then degraded further into small acid-soluble oligonucleotides. The sequence is that of Exodeoxyribonuclease 7 small subunit from Lactiplantibacillus plantarum (strain ATCC BAA-793 / NCIMB 8826 / WCFS1) (Lactobacillus plantarum).